A 372-amino-acid chain; its full sequence is Glutamate 5-kinase (372 aa).

Lys14 serves as a coordination point for ATP. Ser54, Asp141, and Asn153 together coordinate substrate. Position 173-174 (173-174 (TD)) interacts with ATP. Residues 280-358 (RGHVVIDAGA…GEIETVLGYM (79 aa)) enclose the PUA domain.

It belongs to the glutamate 5-kinase family.

It is found in the cytoplasm. It carries out the reaction L-glutamate + ATP = L-glutamyl 5-phosphate + ADP. It functions in the pathway amino-acid biosynthesis; L-proline biosynthesis; L-glutamate 5-semialdehyde from L-glutamate: step 1/2. Catalyzes the transfer of a phosphate group to glutamate to form L-glutamate 5-phosphate. This is Glutamate 5-kinase from Burkholderia orbicola (strain AU 1054).